The primary structure comprises 113 residues: Small ribosomal subunit protein uS14m (113 aa).

Belongs to the universal ribosomal protein uS14 family. Component of the mitochondrial small ribosomal subunit (mt-SSU). Mature N.crassa 74S mitochondrial ribosomes consist of a small (37S) and a large (54S) subunit. The 37S small subunit contains a 16S ribosomal RNA (16S mt-rRNA) and 32 different proteins. The 54S large subunit contains a 23S rRNA (23S mt-rRNA) and 42 different proteins.

The protein localises to the mitochondrion. Component of the mitochondrial ribosome (mitoribosome), a dedicated translation machinery responsible for the synthesis of mitochondrial genome-encoded proteins, including at least some of the essential transmembrane subunits of the mitochondrial respiratory chain. The mitoribosomes are attached to the mitochondrial inner membrane and translation products are cotranslationally integrated into the membrane. The polypeptide is Small ribosomal subunit protein uS14m (mrp2) (Neurospora crassa (strain ATCC 24698 / 74-OR23-1A / CBS 708.71 / DSM 1257 / FGSC 987)).